We begin with the raw amino-acid sequence, 483 residues long: Glutamyl-tRNA(Gln) amidotransferase subunit A (483 aa).

Active-site charge relay system residues include K77 and S152. The active-site Acyl-ester intermediate is S176.

It belongs to the amidase family. GatA subfamily. Heterotrimer of A, B and C subunits.

It carries out the reaction L-glutamyl-tRNA(Gln) + L-glutamine + ATP + H2O = L-glutaminyl-tRNA(Gln) + L-glutamate + ADP + phosphate + H(+). Allows the formation of correctly charged Gln-tRNA(Gln) through the transamidation of misacylated Glu-tRNA(Gln) in organisms which lack glutaminyl-tRNA synthetase. The reaction takes place in the presence of glutamine and ATP through an activated gamma-phospho-Glu-tRNA(Gln). The sequence is that of Glutamyl-tRNA(Gln) amidotransferase subunit A from Listeria monocytogenes serovar 1/2a (strain ATCC BAA-679 / EGD-e).